Consider the following 158-residue polypeptide: Large ribosomal subunit protein bL19 (158 aa).

Positions 1–35 (MTADSKDTSMSEDNTETATAIENSSAMVTDVTSKS) are disordered. The span at 16–35 (ETATAIENSSAMVTDVTSKS) shows a compositional bias: polar residues.

This sequence belongs to the bacterial ribosomal protein bL19 family.

Its function is as follows. This protein is located at the 30S-50S ribosomal subunit interface and may play a role in the structure and function of the aminoacyl-tRNA binding site. This is Large ribosomal subunit protein bL19 from Prochlorococcus marinus (strain MIT 9313).